The following is a 273-amino-acid chain: Putative tyrosine-protein phosphatase H16_A0669 (273 aa).

A signal peptide spans 1–15; sequence MIKWLQRAGCLSAHA. Cysteine 169 functions as the Phosphocysteine intermediate in the catalytic mechanism.

The protein belongs to the protein-tyrosine phosphatase family.

It catalyses the reaction O-phospho-L-tyrosyl-[protein] + H2O = L-tyrosyl-[protein] + phosphate. This chain is Putative tyrosine-protein phosphatase H16_A0669, found in Cupriavidus necator (strain ATCC 17699 / DSM 428 / KCTC 22496 / NCIMB 10442 / H16 / Stanier 337) (Ralstonia eutropha).